Reading from the N-terminus, the 94-residue chain is MLELNLQLFAHKKGGGSTSNGRDSQAKRLGAKASDGELVSGGSILFRQRGTHIHPGTNVGRGGDDTLFAKIEGTVKFEMKRGKKHVSVYPVVAK.

Residues 1–9 (MLELNLQLF) constitute a propeptide that is removed on maturation. The tract at residues 12–33 (KKGGGSTSNGRDSQAKRLGAKA) is disordered.

Belongs to the bacterial ribosomal protein bL27 family. Post-translationally, the N-terminus is cleaved by ribosomal processing cysteine protease Prp.

This is Large ribosomal subunit protein bL27 from Lactococcus lactis subsp. cremoris (strain MG1363).